A 141-amino-acid chain; its full sequence is Large ribosomal subunit protein uL11 (141 aa).

This sequence belongs to the universal ribosomal protein uL11 family. As to quaternary structure, part of the ribosomal stalk of the 50S ribosomal subunit. Interacts with L10 and the large rRNA to form the base of the stalk. L10 forms an elongated spine to which L12 dimers bind in a sequential fashion forming a multimeric L10(L12)X complex. One or more lysine residues are methylated.

Its function is as follows. Forms part of the ribosomal stalk which helps the ribosome interact with GTP-bound translation factors. This Lactiplantibacillus plantarum (strain ATCC BAA-793 / NCIMB 8826 / WCFS1) (Lactobacillus plantarum) protein is Large ribosomal subunit protein uL11.